Here is a 411-residue protein sequence, read N- to C-terminus: uncharacterized protein (411 aa).

The disordered stretch occupies residues 32–108; that stretch reads LGGDPAPKPT…PEHPRRIPIP (77 aa).

This is an uncharacterized protein from Ictalurid herpesvirus 1 (strain Auburn) (IcHV-1).